The sequence spans 242 residues: Ferritin, mitochondrial (242 aa).

Residues 1–49 constitute a mitochondrion transit peptide; that stretch reads MLSCFRLLSRHISPSLASLRPVRCCFALPLRWAPGRPLDPRQIAPRRPL. Residues 47-58 are compositionally biased toward low complexity; it reads RPLAAAASSRDP. The interval 47-71 is disordered; it reads RPLAAAASSRDPTGPAAGPSRVRQN. Residues 70–219 enclose the Ferritin-like diiron domain; the sequence is QNFHPDSEAA…DHVHNLVKMG (150 aa). The Fe cation site is built by Glu87, Glu122, His125, Glu167, and Gln201.

It belongs to the ferritin family. As to quaternary structure, homooligomer of 24 subunits. The functional molecule is roughly spherical and contains a central cavity into which the polymeric mineral iron core is deposited. In terms of tissue distribution, detected in testis and erythroleukemia. Expression is very low or not detectable in brain, colon, heart, kidney, liver, lung, muscle, placental, spleen and small intestine.

The protein localises to the mitochondrion. It catalyses the reaction 4 Fe(2+) + O2 + 4 H(+) = 4 Fe(3+) + 2 H2O. In terms of biological role, catalyzes the oxidation of ferrous iron(II) to ferric iron(III) and stores iron in a soluble, non-toxic, readily available form. Important for iron homeostasis. Iron is taken up in the ferrous form and deposited as ferric hydroxides after oxidation. This Homo sapiens (Human) protein is Ferritin, mitochondrial.